Reading from the N-terminus, the 120-residue chain is Aspartate 1-decarboxylase (120 aa).

The active-site Schiff-base intermediate with substrate; via pyruvic acid is the S25. S25 is subject to Pyruvic acid (Ser). T57 is a binding site for substrate. Y58 (proton donor) is an active-site residue. 73-75 (GAA) is a binding site for substrate.

The protein belongs to the PanD family. Heterooctamer of four alpha and four beta subunits. The cofactor is pyruvate. In terms of processing, is synthesized initially as an inactive proenzyme, which is activated by self-cleavage at a specific serine bond to produce a beta-subunit with a hydroxyl group at its C-terminus and an alpha-subunit with a pyruvoyl group at its N-terminus.

It localises to the cytoplasm. It carries out the reaction L-aspartate + H(+) = beta-alanine + CO2. It functions in the pathway cofactor biosynthesis; (R)-pantothenate biosynthesis; beta-alanine from L-aspartate: step 1/1. In terms of biological role, catalyzes the pyruvoyl-dependent decarboxylation of aspartate to produce beta-alanine. The protein is Aspartate 1-decarboxylase of Cupriavidus necator (strain ATCC 17699 / DSM 428 / KCTC 22496 / NCIMB 10442 / H16 / Stanier 337) (Ralstonia eutropha).